A 299-amino-acid polypeptide reads, in one-letter code: MPNTQRLRIAIQKSGRLSKESQQLLKSCGVKFTVNEQRLIAHADNMPIDLLRVRDDDIPGLVMDGVVDLGIIGENVLEEEQIERQTLNKPSTFIKLRELDFGSCRLSLAVPNEFDYQDVSSLSGLRIATSYPNLLRRFMAEKGISYSDCMLKGSVEVAPRAGLSDAICDLVSTGATLEANGLYETEVIYRSTACIIQSNEAQTAEKQVLINKILSRANGVIRARESKYILLHAPTETLEQIIALLPGAENPTVLPLNDDTNRVAIHAVSTEDLFWDTMEQLTALGASSILVMPIEKMMG.

The protein belongs to the ATP phosphoribosyltransferase family. Long subfamily. The cofactor is Mg(2+).

Its subcellular location is the cytoplasm. The catalysed reaction is 1-(5-phospho-beta-D-ribosyl)-ATP + diphosphate = 5-phospho-alpha-D-ribose 1-diphosphate + ATP. It functions in the pathway amino-acid biosynthesis; L-histidine biosynthesis; L-histidine from 5-phospho-alpha-D-ribose 1-diphosphate: step 1/9. With respect to regulation, feedback inhibited by histidine. In terms of biological role, catalyzes the condensation of ATP and 5-phosphoribose 1-diphosphate to form N'-(5'-phosphoribosyl)-ATP (PR-ATP). Has a crucial role in the pathway because the rate of histidine biosynthesis seems to be controlled primarily by regulation of HisG enzymatic activity. The sequence is that of ATP phosphoribosyltransferase from Shewanella denitrificans (strain OS217 / ATCC BAA-1090 / DSM 15013).